A 354-amino-acid chain; its full sequence is GTPase Obg (354 aa).

The region spanning 1-159 is the Obg domain; sequence MKFVDEVKIH…RDLVLELKLL (159 aa). The OBG-type G domain occupies 160 to 333; that stretch reads ADVGIVGYPN…LLDAVGRALF (174 aa). GTP contacts are provided by residues 166-173, 191-195, 212-215, 283-286, and 314-316; these read GYPNAGKS, FTTLT, DIPG, TKID, and SAV. Residues serine 173 and threonine 193 each contribute to the Mg(2+) site.

It belongs to the TRAFAC class OBG-HflX-like GTPase superfamily. OBG GTPase family. In terms of assembly, monomer. The cofactor is Mg(2+).

Its subcellular location is the cytoplasm. Functionally, an essential GTPase which binds GTP, GDP and possibly (p)ppGpp with moderate affinity, with high nucleotide exchange rates and a fairly low GTP hydrolysis rate. Plays a role in control of the cell cycle, stress response, ribosome biogenesis and in those bacteria that undergo differentiation, in morphogenesis control. The polypeptide is GTPase Obg (Anaeromyxobacter dehalogenans (strain 2CP-C)).